Here is a 311-residue protein sequence, read N- to C-terminus: Ribosomal RNA small subunit methyltransferase H (311 aa).

Residues 33 to 35, aspartate 53, phenylalanine 80, aspartate 101, and glutamine 108 contribute to the S-adenosyl-L-methionine site; that span reads AGH.

This sequence belongs to the methyltransferase superfamily. RsmH family.

It is found in the cytoplasm. The catalysed reaction is cytidine(1402) in 16S rRNA + S-adenosyl-L-methionine = N(4)-methylcytidine(1402) in 16S rRNA + S-adenosyl-L-homocysteine + H(+). Its function is as follows. Specifically methylates the N4 position of cytidine in position 1402 (C1402) of 16S rRNA. In Alkaliphilus oremlandii (strain OhILAs) (Clostridium oremlandii (strain OhILAs)), this protein is Ribosomal RNA small subunit methyltransferase H.